The chain runs to 313 residues: Olfactory receptor 4M1 (313 aa).

Topologically, residues 1-25 are extracellular; sequence MEPANDTTVTEFILTGLSQTREVQL. N-linked (GlcNAc...) asparagine glycosylation occurs at N5. The helical transmembrane segment at 26–46 threads the bilayer; sequence VLFVIFLSFYLFILPVNILII. Over 47 to 57 the chain is Cytoplasmic; that stretch reads CTIRLDSHLSS. The helical transmembrane segment at 58–78 threads the bilayer; it reads PMYFLLANLAFLDIWYSSITA. At 79–97 the chain is on the extracellular side; that stretch reads PKMLVDFFVERKIISFGGC. Residues C97 and C179 are joined by a disulfide bond. Residues 98-118 form a helical membrane-spanning segment; that stretch reads IAQLFFLHFVGASEMFLLTVM. At 119–142 the chain is on the cytoplasmic side; that stretch reads AFDRYAAICRPLHYATIMNRRLCC. A helical transmembrane segment spans residues 143–163; that stretch reads ILVALSWTGGFVHSIIQVALI. Residues 164–204 are Extracellular-facing; it reads VRLPFCGPNELDNYFCDITQVVRIACANTFLEEMVMIFSSG. The helical transmembrane segment at 205 to 225 threads the bilayer; it reads LISVVCFIALLMSYAFLLTML. Residues 226–238 are Cytoplasmic-facing; the sequence is KKHSSSGESTSRA. A helical transmembrane segment spans residues 239–259; that stretch reads ISTCYSHITIVVLMFGPSIYI. At 260–270 the chain is on the extracellular side; it reads YARPFDSFSLD. A helical membrane pass occupies residues 271–291; sequence KVVSVFHTVIFPLLNPIIYTL. The Cytoplasmic portion of the chain corresponds to 292–313; sequence RNKEVKAAMRKLVNRYIFCKEK.

This sequence belongs to the G-protein coupled receptor 1 family. Highly expressed in liver but not in adipose tissue. Also expressed at high level in testis.

Its subcellular location is the cell membrane. Olfactory receptor that acts as a receptor of Asprosin hormone at the surface of hepatocytes to promote hepatocyte glucose release. Also binds Asprosin in the arcuate nucleus of the hypothalamus, thereby stimulating appetite by promoting orexigenic AgRP neuronal activity. In testis, Asprosin-binding promotes sperm progressive motility and enhances male fertility. The activity of this receptor is mediated by G proteins which activate adenylyl cyclase, resulting in an elevation of intracellular cAMP. The chain is Olfactory receptor 4M1 from Mus musculus (Mouse).